A 172-amino-acid polypeptide reads, in one-letter code: Lipoprotein signal peptidase (172 aa).

A run of 2 helical transmembrane segments spans residues 70–90 (ERWLLVAGTALIAAGIVAWIW) and 94–114 (AKGDVVALGLVLGGAIGNIAD). Active-site residues include Asp-123 and Asp-142. The chain crosses the membrane as a helical span at residues 134–154 (PFLVFNVADAAITIGVLILVL).

The protein belongs to the peptidase A8 family.

Its subcellular location is the cell inner membrane. The enzyme catalyses Release of signal peptides from bacterial membrane prolipoproteins. Hydrolyzes -Xaa-Yaa-Zaa-|-(S,diacylglyceryl)Cys-, in which Xaa is hydrophobic (preferably Leu), and Yaa (Ala or Ser) and Zaa (Gly or Ala) have small, neutral side chains.. Its pathway is protein modification; lipoprotein biosynthesis (signal peptide cleavage). Functionally, this protein specifically catalyzes the removal of signal peptides from prolipoproteins. The sequence is that of Lipoprotein signal peptidase from Rhizorhabdus wittichii (strain DSM 6014 / CCUG 31198 / JCM 15750 / NBRC 105917 / EY 4224 / RW1) (Sphingomonas wittichii).